We begin with the raw amino-acid sequence, 200 residues long: Ribosomal RNA large subunit methyltransferase E (200 aa).

Residues Gly49, Trp51, Asp69, Asp87, and Asp111 each contribute to the S-adenosyl-L-methionine site. Catalysis depends on Lys151, which acts as the Proton acceptor.

This sequence belongs to the class I-like SAM-binding methyltransferase superfamily. RNA methyltransferase RlmE family.

The protein resides in the cytoplasm. The catalysed reaction is uridine(2552) in 23S rRNA + S-adenosyl-L-methionine = 2'-O-methyluridine(2552) in 23S rRNA + S-adenosyl-L-homocysteine + H(+). Its function is as follows. Specifically methylates the uridine in position 2552 of 23S rRNA at the 2'-O position of the ribose in the fully assembled 50S ribosomal subunit. In Lawsonia intracellularis (strain PHE/MN1-00), this protein is Ribosomal RNA large subunit methyltransferase E.